The chain runs to 137 residues: Bet1-like protein At4g14600 (137 aa).

The Cytoplasmic segment spans residues 1 to 113 (MASNPHRSGA…MSIIRSGNNH (113 aa)). The region spanning 43–105 (DPMHSDLDDE…KNNIRKLNMS (63 aa)) is the t-SNARE coiled-coil homology domain. The chain crosses the membrane as a helical; Anchor for type IV membrane protein span at residues 114 to 134 (IMHVVLFALLVFFVLYIWSKM). The Vesicular segment spans residues 135–137 (FKR).

Belongs to the BET1 family.

The protein localises to the golgi apparatus membrane. It localises to the endoplasmic reticulum membrane. Its function is as follows. Required for vesicular transport from the ER to the Golgi complex. Functions as a SNARE associated with ER-derived vesicles. The sequence is that of Bet1-like protein At4g14600 from Arabidopsis thaliana (Mouse-ear cress).